We begin with the raw amino-acid sequence, 305 residues long: 2-aminophenol 1,6-dioxygenase beta subunit (305 aa).

Fe cation is bound by residues His-14, His-63, and His-196.

It belongs to the LigB/MhpB extradiol dioxygenase family. In terms of assembly, heterotetramer of 2 alpha and 2 beta subunits. The cofactor is Fe(2+).

The catalysed reaction is 2-aminophenol + O2 = 2-aminomuconate 6-semialdehyde. Its activity is regulated as follows. Strongly inhibited by CuSO(4), FeCl(3), K(3)[Fe(CN)(6)], AgNO3, HgCl(2) and MnCl(2). Its function is as follows. Component of the 2-aminophenol 1,6-dioxygenase complex that catalyzes the ring fission of 2-aminophenol to produce 2-aminomuconic 6-semialdehyde. AmnB seems to be the catalytic subunit of the complex. The enzyme is also active toward 2-amino-p-cresol, 6-amino-m-cresol, 2-amino-m-cresol, 2-amino-4,5-dimethylphenol, 2-amino-4-chlorophenol, and catechol. This Pseudomonas sp protein is 2-aminophenol 1,6-dioxygenase beta subunit (amnB).